A 329-amino-acid chain; its full sequence is Serine, glycine and glutamine-rich protein (329 aa).

The signal sequence occupies residues 1–16 (MKTVLLFVVLVGLAYC). Residues 38–48 (SSSSSSSSSSS) show a composition bias toward low complexity. Residues 38–80 (SSSSSSSSSSSSGGGGSSGGGASGGGGGSSSGGGGASGGGGGG) form a disordered region. The span at 49-80 (SGGGGSSGGGASGGGGGSSSGGGGASGGGGGG) shows a compositional bias: gly residues.

Prismatic layer of shell (at protein level). Expressed primarily in the mantle with highest level in the mantle edge and lower level in the mantle pallium.

The protein resides in the secreted. The protein is Serine, glycine and glutamine-rich protein of Pinctada maxima (Silver-lipped pearl oyster).